Here is a 240-residue protein sequence, read N- to C-terminus: Uridylate kinase (240 aa).

14-17 (KLSG) contacts ATP. Gly-56 lines the UMP pocket. Residues Gly-57 and Arg-61 each contribute to the ATP site. UMP is bound by residues Asp-76 and 137-144 (TGNPFFTT). Residues Thr-164, Tyr-170, and Asp-173 each contribute to the ATP site.

The protein belongs to the UMP kinase family. Homohexamer.

It is found in the cytoplasm. The catalysed reaction is UMP + ATP = UDP + ADP. The protein operates within pyrimidine metabolism; CTP biosynthesis via de novo pathway; UDP from UMP (UMPK route): step 1/1. Its activity is regulated as follows. Inhibited by UTP. Catalyzes the reversible phosphorylation of UMP to UDP. The polypeptide is Uridylate kinase (Paracidovorax citrulli (strain AAC00-1) (Acidovorax citrulli)).